We begin with the raw amino-acid sequence, 546 residues long: MKNNWIDVLDESLVKDFYNNQTSEEQQEGLNTTLSFGTAGIRGKFGLGEGRLNKFTVSKVALGFAHYLTSSIAHPVVVIHYDTRHLSPEFAQIIANILASLDIKVYLADTYRTTPDLSFAVRYLQADAGVMITASHNPKDYNGIKVYGEDGAQLSTDDSARLSTYIDKLGHPLHINLPSLTTEQQSLIHSVPSEVREDYFKNVQDLVGTIPQSDLKVVFTSLHGTSVPVVPDILSSLNFNQFELVASQCEPDSDFSSVASANPEDHKAFDQSIELANLIDADLLIGTDPDADRLGIVERDAEGNIYYYNGNQIGALLLNYRIKQTEGLPNRIMFQSIVSGGLAKSLAQYHNVNFKEVLTGFKYIAAEIRHLSPEQNFIFGYEESYGFLARPFVRDKDAIQIVPLMIKYAAELKNEGRMLKDELEDITRNVGNFNDKLFSHTFEGTQGKAKIENIMTQFRSETPTEMCGLKVIAIEDFETGKKTDLQNDEVSDITLPKANVIKIYFNEGFIALRPSGTEPKIKLYVSLSCDHFDVIAQKINDAIFNS.

S135 acts as the Phosphoserine intermediate in catalysis. Mg(2+)-binding residues include S135, D288, D290, and D292.

It belongs to the phosphohexose mutase family. Mg(2+) is required as a cofactor.

It catalyses the reaction alpha-D-glucose 1-phosphate = alpha-D-glucose 6-phosphate. It functions in the pathway glycolipid metabolism; diglucosyl-diacylglycerol biosynthesis. Catalyzes the interconversion between glucose-6-phosphate and alpha-glucose-1-phosphate. This is the first step in the biosynthesis of diglucosyl-diacylglycerol (Glc2-DAG), i.e. a glycolipid found in the membrane, which is also used as a membrane anchor for lipoteichoic acid (LTA). In Staphylococcus epidermidis (strain ATCC 12228 / FDA PCI 1200), this protein is Phosphoglucomutase (pgcA).